A 221-amino-acid chain; its full sequence is Hypoxanthine-guanine phosphoribosyltransferase (221 aa).

Ser2 bears the N-acetylserine mark. GMP contacts are provided by residues Lys85, 110 to 118 (DEVDDTRTT), Lys159, and 188 to 194 (WYAYPWE). Residue Asp114 is the Proton acceptor of the active site.

The protein belongs to the purine/pyrimidine phosphoribosyltransferase family. Dimer. It depends on Mg(2+) as a cofactor.

The protein resides in the cytoplasm. Its subcellular location is the nucleus. It carries out the reaction IMP + diphosphate = hypoxanthine + 5-phospho-alpha-D-ribose 1-diphosphate. The enzyme catalyses GMP + diphosphate = guanine + 5-phospho-alpha-D-ribose 1-diphosphate. It participates in purine metabolism; IMP biosynthesis via salvage pathway; IMP from hypoxanthine: step 1/1. Subject to feedback inhibition by GMP. Converts guanine to guanosine monophosphate, and hypoxanthine to inosine monophosphate. Transfers the 5-phosphoribosyl group from 5-phosphoribosylpyrophosphate onto the purine. Plays a central role in the generation of purine nucleotides through the purine salvage pathway. In Saccharomyces cerevisiae (strain ATCC 204508 / S288c) (Baker's yeast), this protein is Hypoxanthine-guanine phosphoribosyltransferase (HPT1).